The following is a 761-amino-acid chain: Proton-coupled zinc antiporter SLC30A5 (761 aa).

N-acetylmethionine is present on M1. Over 1-29 the chain is Cytoplasmic; the sequence is MEEKYGGDARPGPGGGLGPVDVPSARLTR. Residues 30-46 form a helical membrane-spanning segment; it reads YILLLCLTKCLKAVGLF. The Lumenal portion of the chain corresponds to 47–54; it reads ESYDLLKA. A helical membrane pass occupies residues 55–75; the sequence is VHIVQFIFILKLGTAFFMVLF. At 76–96 the chain is on the cytoplasmic side; sequence QKPFSSGKPITKHQWIKIFKH. Residues 97 to 117 form a helical membrane-spanning segment; that stretch reads AVAGCIISLLWFFGLTLCGPL. Residue R118 is a topological domain, lumenal. The helical transmembrane segment at 119–139 threads the bilayer; sequence TLLLFEHSDIVVISLLSVLFT. The Cytoplasmic segment spans residues 140–150; sequence SSGGGPAKTRG. Residues 151-171 traverse the membrane as a helical segment; that stretch reads AAFFIIAVICLLLFDNDDLMA. Topologically, residues 172-191 are lumenal; sequence KMAEHPEGHHDSALTHMLYT. Residues 192-212 traverse the membrane as a helical segment; the sequence is AIAFLGVADHKGGVLLLVLAL. Over 213–236 the chain is Cytoplasmic; sequence CCKVGFHTASRKLSIDVGGAKRLQ. Residues 237–257 form a helical membrane-spanning segment; the sequence is ALSQLVSVFLLCPWVIVLSVT. Topologically, residues 258-264 are lumenal; sequence TESKVES. Residues 265–285 traverse the membrane as a helical segment; that stretch reads WFSLIMPFTTVIFFVMILDFY. Topologically, residues 286–301 are cytoplasmic; it reads MDSVCSVKMDVSKCAR. The chain crosses the membrane as a helical span at residues 302–322; sequence YGSFPIFISALLFGNFWTHPI. Over 323-340 the chain is Lumenal; the sequence is TDQLRAMNRAAHQESTEH. Residues 341 to 361 form a helical membrane-spanning segment; sequence VLSGGVVVSAVFFILSANILS. Residues 362–416 lie on the Cytoplasmic side of the membrane; that stretch reads SPSKRGQKGTLIGYSPEGTPLYHFMGDAFQHSSQSVPRFIKDSLKQVLEESDSRQ. The helical transmembrane segment at 417 to 437 threads the bilayer; it reads IFYFLCLNLLFTFVELFYGVL. Residues 418–636 are mediates homodimerization with SLC30A6; the sequence is FYFLCLNLLF…VLIFLSVIPL (219 aa). Over 438–446 the chain is Lumenal; sequence TNSLGLISD. A helical transmembrane segment spans residues 447–467; that stretch reads GFHMLFDCSALVMGLFAALMS. Positions 449 and 453 each coordinate Zn(2+). Residues 468–481 lie on the Cytoplasmic side of the membrane; the sequence is RWKATRIFSYGYGR. Residues 482–502 form a helical membrane-spanning segment; it reads IEILSGFINGLFLIVIAFFVF. The Lumenal portion of the chain corresponds to 503 to 518; sequence MESVARLIDPPELDTN. Residues 519 to 539 form a helical membrane-spanning segment; it reads MLTPVSVGGLIVNLIGICAFS. Residues 540–574 form a his-rich loop; required for zinc transport region; sequence HAHSHGHGASQGNCHSDHGHSHHAHGHGHDHGHSH. Residues 540–588 lie on the Cytoplasmic side of the membrane; sequence HAHSHGHGASQGNCHSDHGHSHHAHGHGHDHGHSHGFTGGGMNANMRGV. Residues 549–576 form a disordered region; it reads SQGNCHSDHGHSHHAHGHGHDHGHSHGF. The chain crosses the membrane as a helical span at residues 589 to 609; it reads FLHVLADTLGSIGVIVSTVLI. Zn(2+)-binding residues include H591 and D595. Over 610-613 the chain is Lumenal; the sequence is EQFG. Residues 614–634 traverse the membrane as a helical segment; sequence WFIADPLCSLFIAVLIFLSVI. Over 635-761 the chain is Cytoplasmic; sequence PLIKDACQVL…KYCKDGTYIM (127 aa).

The protein belongs to the cation diffusion facilitator (CDF) transporter (TC 2.A.4) family. SLC30A subfamily. In terms of assembly, heterodimer with SLC30A6/ZNT6; form a functional zinc ion transmembrane transporter. Could homodimerize through the formation of dityrosine bonds upon oxidative stress. As to expression, ubiquitously expressed.

Its subcellular location is the golgi apparatus. It is found in the golgi stack membrane. The protein localises to the cytoplasmic vesicle. It localises to the COPII-coated vesicle membrane. The protein resides in the secretory vesicle membrane. Its subcellular location is the trans-Golgi network membrane. The catalysed reaction is Zn(2+)(in) + 2 H(+)(out) = Zn(2+)(out) + 2 H(+)(in). Together with SLC30A6 forms a functional proton-coupled zinc ion antiporter mediating zinc entry into the lumen of organelles along the secretory pathway. By contributing to zinc ion homeostasis within the early secretory pathway, regulates the activation and folding of enzymes like alkaline phosphatases and enzymes involved in phosphatidylinositol glycan anchor biosynthesis. Through the transport of zinc into secretory granules of pancreatic beta-cells, plays an important role in the storage and secretion of insulin. This Mus musculus (Mouse) protein is Proton-coupled zinc antiporter SLC30A5.